A 225-amino-acid chain; its full sequence is Histone H1 (225 aa).

The disordered stretch occupies residues 1-20 (MGPKATSGTRGRGKKVGTKT). The 72-residue stretch at 23-94 (PLPKYKDLIV…GPAGSIKLLK (72 aa)) folds into the H15 domain. The disordered stretch occupies residues 95 to 147 (KAAQPKPEEAKRAAKPAKRVVKAAKPAKAKPAKAAKAAKPAKPVKAAKAASAV). A compositionally biased stretch (basic residues) spans 107–127 (AAKPAKRVVKAAKPAKAKPAK). Residues 128 to 147 (AAKAAKPAKPVKAAKAASAV) are compositionally biased toward low complexity.

This sequence belongs to the histone H1/H5 family.

It localises to the nucleus. Its subcellular location is the chromosome. Functionally, could act as an H1-type linker histone. This chain is Histone H1 (HHOA), found in Eremothecium gossypii (strain ATCC 10895 / CBS 109.51 / FGSC 9923 / NRRL Y-1056) (Yeast).